The following is a 466-amino-acid chain: MRTNFEWFEEAKRFIPGGVNSPVRAYAAVGGTPRFLAKAQGAYVTDIEGREYVDLVSSWGPLILGHAHPKVIDAVINTAHRGMSYGAPTTLEVELAELVCNRICNAQGIKPVERLRLVSTGTESCMTAIRLARCFTGRDLIVKFSGHYHGHADPFLIDAGSGLVGHPSSGGVPESVAKNTLVVPYNDLAVLEYLFEAYPNQIACIITEACPANMGVIPPDPGFNARVADLGHSHGALIIFDEVITGFRVGSGGFWALETSLASQQPTQAVSEGSVSDSAYSAYVPDLFTFAKVLGGGLPIGAIGGRAEIMDLLSPSGPVYQAGTLSGNPLATAAGLATLRLADSNIYEHMNRVARALINEIQSAFHDAGVPCTVQSAGNLFGISFSAIAPRDFTQATSQEHWRYSNFFHSMLNSGVLLPPSVYEAWFVSAAFDDRAIERVVNALPDAVRAAGSAPARPKGFEPPTF.

Lys-292 bears the N6-(pyridoxal phosphate)lysine mark.

It belongs to the class-III pyridoxal-phosphate-dependent aminotransferase family. HemL subfamily. Homodimer. It depends on pyridoxal 5'-phosphate as a cofactor.

It localises to the cytoplasm. The catalysed reaction is (S)-4-amino-5-oxopentanoate = 5-aminolevulinate. Its pathway is porphyrin-containing compound metabolism; protoporphyrin-IX biosynthesis; 5-aminolevulinate from L-glutamyl-tRNA(Glu): step 2/2. The protein is Glutamate-1-semialdehyde 2,1-aminomutase of Tropheryma whipplei (strain TW08/27) (Whipple's bacillus).